The chain runs to 358 residues: MNPFPRAEISSSALQTNLAALRQQAPASRVMAVVKANGYGHGLLNVANCLVSADGFGLARLDEALELRAGGVTARLLLLEGFFRATDLPLLVGHDIDTVVHHSSQLEMLEQTVLSKPVTVWLKVDSGMHRLGFTPEQFSTVYDRLMACSNVAKPIHLMTHFACADEPDNTYTSVQMAAFNTLTAGLPGFRTLANSAGALYWPQSQGDWIRPGIALYGVSPVTGDCGANHGLVPAMELVSQLIAVRDHKANQPVGYGCFWTAKQDTRLGVVAIGYGDGYPRNAPEGTPVWVNGRRVPIVGRVSMDMLTVDLGQDAQDKVGDSALLWGKALPVEEVAEHIGTIAYELVTKLTPRVAVCLA.

The active-site Proton acceptor; specific for D-alanine is the Lys-35. N6-(pyridoxal phosphate)lysine is present on Lys-35. Arg-130 serves as a coordination point for substrate. The Proton acceptor; specific for L-alanine role is filled by Tyr-255. Met-303 is a binding site for substrate.

Belongs to the alanine racemase family. It depends on pyridoxal 5'-phosphate as a cofactor.

It carries out the reaction L-alanine = D-alanine. It functions in the pathway amino-acid biosynthesis; D-alanine biosynthesis; D-alanine from L-alanine: step 1/1. Catalyzes the interconversion of L-alanine and D-alanine. May also act on other amino acids. This chain is Alanine racemase (alr), found in Shewanella baltica (strain OS195).